We begin with the raw amino-acid sequence, 158 residues long: MPSPVESFELDHCAVKAPYVRHCGVHKIGSDGVVNKFDIRFCQPNKEAMDPAAIHTLEHLLAYTLRKHVTKYDHFDIIDISPMGCQTGFYLVVSGSPTVDEIIDLLEETMKDALNATEVPAATERQCGQAKLHDLEAAKELMRFWLSQEKSELKKVFG.

Positions 55, 59, and 127 each coordinate Fe cation.

This sequence belongs to the LuxS family. As to quaternary structure, homodimer. Fe cation serves as cofactor.

The catalysed reaction is S-(5-deoxy-D-ribos-5-yl)-L-homocysteine = (S)-4,5-dihydroxypentane-2,3-dione + L-homocysteine. In terms of biological role, involved in the synthesis of autoinducer 2 (AI-2) which is secreted by bacteria and is used to communicate both the cell density and the metabolic potential of the environment. The regulation of gene expression in response to changes in cell density is called quorum sensing. Catalyzes the transformation of S-ribosylhomocysteine (RHC) to homocysteine (HC) and 4,5-dihydroxy-2,3-pentadione (DPD). This Geobacillus thermodenitrificans (strain NG80-2) protein is S-ribosylhomocysteine lyase.